Reading from the N-terminus, the 259-residue chain is 3-methyl-2-oxobutanoate hydroxymethyltransferase (259 aa).

Mg(2+) contacts are provided by D44 and D83. Residues 44-45, D83, and K112 contribute to the 3-methyl-2-oxobutanoate site; that span reads DS. A Mg(2+)-binding site is contributed by E114. The active-site Proton acceptor is the E177.

This sequence belongs to the PanB family. In terms of assembly, homodecamer; pentamer of dimers. The cofactor is Mg(2+).

The protein localises to the cytoplasm. The enzyme catalyses 3-methyl-2-oxobutanoate + (6R)-5,10-methylene-5,6,7,8-tetrahydrofolate + H2O = 2-dehydropantoate + (6S)-5,6,7,8-tetrahydrofolate. It functions in the pathway cofactor biosynthesis; (R)-pantothenate biosynthesis; (R)-pantoate from 3-methyl-2-oxobutanoate: step 1/2. Its function is as follows. Catalyzes the reversible reaction in which hydroxymethyl group from 5,10-methylenetetrahydrofolate is transferred onto alpha-ketoisovalerate to form ketopantoate. The chain is 3-methyl-2-oxobutanoate hydroxymethyltransferase from Nitratiruptor sp. (strain SB155-2).